Consider the following 255-residue polypeptide: Phosphate import ATP-binding protein PstB (255 aa).

Residues 9 to 250 enclose the ABC transporter domain; it reads MYAQGLQFYY…PRNKQTEDYI (242 aa). 41-48 lines the ATP pocket; the sequence is GPSGCGKS.

The protein belongs to the ABC transporter superfamily. Phosphate importer (TC 3.A.1.7) family. In terms of assembly, the complex is composed of two ATP-binding proteins (PstB), two transmembrane proteins (PstC and PstA) and a solute-binding protein (PstS).

The protein resides in the cell inner membrane. The catalysed reaction is phosphate(out) + ATP + H2O = ADP + 2 phosphate(in) + H(+). Functionally, part of the ABC transporter complex PstSACB involved in phosphate import. Responsible for energy coupling to the transport system. The chain is Phosphate import ATP-binding protein PstB from Nitratidesulfovibrio vulgaris (strain ATCC 29579 / DSM 644 / CCUG 34227 / NCIMB 8303 / VKM B-1760 / Hildenborough) (Desulfovibrio vulgaris).